We begin with the raw amino-acid sequence, 369 residues long: Beta-1,4-galactosyltransferase 2 (369 aa).

Residues 1 to 15 (MSRLLGGTLERVCKA) lie on the Cytoplasmic side of the membrane. The chain crosses the membrane as a helical; Signal-anchor for type II membrane protein span at residues 16 to 36 (VLLLCLLHFLVAVILYFDVYA). Residues 37-369 (QHLAFFSRFS…GRPMSWLNQG (333 aa)) are Lumenal-facing. Residues 59–75 (SSSTNCSRPNATASSSG) show a composition bias toward polar residues. The disordered stretch occupies residues 59 to 90 (SSSTNCSRPNATASSSGLPEVPSARPGPTAPV). N-linked (GlcNAc...) asparagine glycans are attached at residues N63 and N68. C94 and C136 form a disulfide bridge. Residues 147–151 (PFRHR), 186–188 (FNR), 214–215 (VD), and W275 contribute to the UDP-alpha-D-galactose site. Residues C208 and C227 are joined by a disulfide bond. D215 lines the Mn(2+) pocket. An N-acetyl-D-glucosamine-binding site is contributed by 277 to 280 (GEDD). H308 lines the Mn(2+) pocket. 308–310 (HDR) lines the UDP-alpha-D-galactose pocket. R320 contacts N-acetyl-D-glucosamine. N354 is a glycosylation site (N-linked (GlcNAc...) asparagine).

Belongs to the glycosyltransferase 7 family. It depends on Mn(2+) as a cofactor.

It localises to the golgi apparatus. The protein localises to the golgi stack membrane. It catalyses the reaction D-glucose + UDP-alpha-D-galactose = lactose + UDP + H(+). The enzyme catalyses an N-acetyl-beta-D-glucosaminyl derivative + UDP-alpha-D-galactose = a beta-D-galactosyl-(1-&gt;4)-N-acetyl-beta-D-glucosaminyl derivative + UDP + H(+). The catalysed reaction is N-acetyl-D-glucosamine + UDP-alpha-D-galactose = beta-D-galactosyl-(1-&gt;4)-N-acetyl-D-glucosamine + UDP + H(+). It functions in the pathway protein modification; protein glycosylation. Its function is as follows. Responsible for the synthesis of complex-type N-linked oligosaccharides in many glycoproteins as well as the carbohydrate moieties of glycolipids. Can produce lactose. The polypeptide is Beta-1,4-galactosyltransferase 2 (B4GALT2) (Cricetulus griseus (Chinese hamster)).